A 550-amino-acid polypeptide reads, in one-letter code: Membrane protein insertase YidC (550 aa).

6 helical membrane passes run 6-26 (LVLFLVFSLSLVMLWNAWLKQ), 333-353 (VVDYGWLTVIAAPLFWVLSWI), 356-376 (VVGNWGWAIIIVTILIKLMFF), 430-450 (LPILVQIPVFISLYWVLLGSV), 469-489 (PYFILPVIMGVSMLIQMKLNP), and 504-524 (PVIFTFMFLWFPSGLVLYWVV).

This sequence belongs to the OXA1/ALB3/YidC family. Type 1 subfamily. In terms of assembly, interacts with the Sec translocase complex via SecD. Specifically interacts with transmembrane segments of nascent integral membrane proteins during membrane integration.

It is found in the cell inner membrane. Required for the insertion and/or proper folding and/or complex formation of integral membrane proteins into the membrane. Involved in integration of membrane proteins that insert both dependently and independently of the Sec translocase complex, as well as at least some lipoproteins. Aids folding of multispanning membrane proteins. The polypeptide is Membrane protein insertase YidC (Aromatoleum aromaticum (strain DSM 19018 / LMG 30748 / EbN1) (Azoarcus sp. (strain EbN1))).